The sequence spans 887 residues: Oxysterol-binding protein-related protein 3 (887 aa).

The segment at 1 to 35 (MMSDEKNLGVSQKLVSPSRSTSSCSSKQGSRQDSW) is disordered. 2 positions are modified to phosphoserine: Ser16 and Ser34. Residues 16 to 32 (SPSRSTSSCSSKQGSRQ) are compositionally biased toward low complexity. Residues 51 to 146 (PPVQKGFLLK…WVSKLRHHRM (96 aa)) enclose the PH domain. Residues 161–167 (HFFSGST) carry the FFAT 1 motif. Phosphoserine occurs at positions 200, 251, and 265. A disordered region spans residues 261 to 326 (GSFESPKKEK…KNYSDGSETS (66 aa)). Residues 268–280 (KEKRSHRRWRSRA) show a composition bias toward basic residues. Phosphoserine occurs at positions 304, 309, 320, 323, 371, 372, 410, 425, 437, and 440. Residues 450–454 (EFFDA) carry the FFAT 2 motif.

It belongs to the OSBP family. As to quaternary structure, homodimer. Interacts with RRAS. Interacts (phosphorylated form) with VAPA. Interacts with OSBPL6. Post-translationally, phosphorylation is enhanced in vitro by phorbol-12-myristate-13-acetate (PMA), forskolin and calcium ionophore A23187. Phosphorylation seems to be stimulated in conditions of low cell-cell (or cell-matrix) adhesion. In terms of tissue distribution, expressed in a subset of small lymphocytes (at protein level). Expressed at high concentration in kidney, lymph node and thymus. Expressed at moderate concentration in stomach, jejunum, ileum, appendix, spleen, leukocytes, trachea, lung and thyroid gland. Expressed at low concentration in whole brain, esophagus, duodenum, ileocecum, colon, skeletal muscle, bone marrow, placenta and mammary gland. Isoform 1a, isoform 1b, isoform 1c and isoform 1d are highly expressed in brain, bone marrow, colon, kidney, lung, skeletal muscle, spleen, thymus and thyroid. Not expressed in heart and liver. Isoform 2a, isoform 2b, isoform 2c and isoform 2d are expressed in brain, bone marrow, kidney, skeletal muscle, spleen, thymus and thyroid. Not expressed in heart, liver and lung.

It is found in the endoplasmic reticulum membrane. The protein resides in the cytoplasm. Its subcellular location is the cytosol. It localises to the cell membrane. The protein localises to the cell projection. It is found in the filopodium tip. The protein resides in the nucleus membrane. In terms of biological role, phosphoinositide-binding protein which associates with both cell and endoplasmic reticulum (ER) membranes. Can bind to the ER membrane protein VAPA and recruit VAPA to plasma membrane sites, thus linking these intracellular compartments. The ORP3-VAPA complex stimulates RRAS signaling which in turn attenuates integrin beta-1 (ITGB1) activation at the cell surface. With VAPA, may regulate ER morphology. Has a role in regulation of the actin cytoskeleton, cell polarity and cell adhesion. Binds to phosphoinositides with preference for PI(3,4)P2 and PI(3,4,5)P3. Also binds 25-hydroxycholesterol and cholesterol. This is Oxysterol-binding protein-related protein 3 (OSBPL3) from Homo sapiens (Human).